A 220-amino-acid polypeptide reads, in one-letter code: Fibroblast growth factor 3 (220 aa).

The first 19 residues, 1-19 (MLVIWLLLLALLPEPRVPA), serve as a signal peptide directing secretion. A disordered region spans residues 19-40 (AATASPRAPRDAGGRGGVYEHL). An N-linked (GlcNAc...) asparagine glycan is attached at Asn-66.

The protein belongs to the heparin-binding growth factors family.

It is found in the secreted. In terms of biological role, plays an important role in the regulation of embryonic development, cell proliferation, and cell differentiation. This chain is Fibroblast growth factor 3 (FGF3), found in Gallus gallus (Chicken).